The following is a 217-amino-acid chain: Adenylate kinase (217 aa).

10 to 15 (GAGKGT) contributes to the ATP binding site. The tract at residues 30–59 (STGDIFRAAMKNETPMGIEAKKYIDKGELV) is NMP. AMP-binding positions include Thr31, Arg36, 57 to 59 (ELV), 85 to 88 (GFPR), and Gln92. Residues 126 to 164 (GRFICRNCGATYHKLYNAPKVEGTCDVCGHHEFYQRDDD) are LID. Arg127 serves as a coordination point for ATP. The Zn(2+) site is built by Cys130 and Cys133. Residue 136–137 (TY) participates in ATP binding. 2 residues coordinate Zn(2+): Cys150 and Cys153. AMP-binding residues include Arg161 and Arg172. Gln200 provides a ligand contact to ATP.

Belongs to the adenylate kinase family. Monomer.

It is found in the cytoplasm. It carries out the reaction AMP + ATP = 2 ADP. It participates in purine metabolism; AMP biosynthesis via salvage pathway; AMP from ADP: step 1/1. Its function is as follows. Catalyzes the reversible transfer of the terminal phosphate group between ATP and AMP. Plays an important role in cellular energy homeostasis and in adenine nucleotide metabolism. The protein is Adenylate kinase of Limosilactobacillus reuteri subsp. reuteri (strain JCM 1112) (Lactobacillus reuteri).